Reading from the N-terminus, the 1289-residue chain is Ethylene-insensitive protein 2.1 (1289 aa).

Transmembrane regions (helical) follow at residues 18 to 38 (LLPA…PGKW), 48 to 68 (FGFD…LCQY), 96 to 116 (FLGV…ILGI), 128 to 148 (LSTC…FATL), and 155 to 175 (SFLC…GVLI). N-linked (GlcNAc...) asparagine glycosylation is present at Asn-185. Residues 199-219 (LMSLLGASIMPHNFFLHSAIV) traverse the membrane as a helical segment. Asn-227 carries an N-linked (GlcNAc...) asparagine glycan. Helical transmembrane passes span 235-255 (LNHF…NFVL), 260-280 (ANVF…MSLM), 288-308 (VAPF…AFSW), 335-355 (IIAV…GIYQ), 356-376 (LLIL…IPLF), 393-413 (FLEF…IIFV), and 439-459 (YIVL…LAAT). Residue Asn-521 is glycosylated (N-linked (GlcNAc...) asparagine). The tract at residues 611-659 (LHTEKEDDEGDNWEPEDSSKGVPGSTLSLTSDGPGSFRSLSGKSDAGGN) is disordered. A compositionally biased stretch (acidic residues) spans 616 to 626 (EDDEGDNWEPE). Polar residues predominate over residues 635–652 (STLSLTSDGPGSFRSLSG). A phosphoserine mark is found at Ser-646 and Ser-663. The N-linked (GlcNAc...) asparagine glycan is linked to Asn-745. A disordered region spans residues 792 to 816 (SIADSSERRYSGVRTPPSSDGWDNQ). Residues 807–816 (PPSSDGWDNQ) are compositionally biased toward polar residues. Thr-819 carries the post-translational modification Phosphothreonine. Residue Ser-923 is modified to Phosphoserine. Asn-1025 is a glycosylation site (N-linked (GlcNAc...) asparagine). A disordered region spans residues 1208 to 1227 (HRSSPPASNGMLPPASKPGR). The short motif at 1274 to 1281 (LKRYKRRL) is the Nuclear localization signal element.

The protein belongs to the NRAMP (TC 2.A.55) family.

It localises to the endoplasmic reticulum membrane. The protein resides in the nucleus. The protein localises to the cytoplasm. Its function is as follows. Central factor in signaling pathways regulated by ethylene (ET) and involved in various processes including development, plant defense, senescence, nucleotide sugar flux, and tropisms. Trafficking signal inducing ethylene response. The nuclear localization is both necessary and sufficient to activate EIN3-mediated transcription and ethylene responses. In Populus trichocarpa (Western balsam poplar), this protein is Ethylene-insensitive protein 2.1.